Consider the following 692-residue polypeptide: Serine/threonine-protein phosphatase PP-Z1 (692 aa).

Disordered regions lie at residues 1-309 and 321-357; these read MGNS…DIEN and ENVN…PKKF. Glycine 2 carries the N-myristoyl glycine lipid modification. Low complexity-rich tracts occupy residues 32 to 41, 49 to 69, and 91 to 122; these read SHSVKSAKSN, SLPS…STPS, and SSSH…RRSS. Residue serine 49 is modified to Phosphoserine. Residues 170-179 show a composition bias toward acidic residues; the sequence is LTDDDNDDKD. Threonine 171 is modified (phosphothreonine). The segment covering 190 to 204 has biased composition (low complexity); sequence RSSNSRPSSIRSGSV. Over residues 207–216 the composition is skewed to basic and acidic residues; it reads RKSDVTHEEP. Residues serine 209 and serine 222 each carry the phosphoserine modification. Polar residues-rich tracts occupy residues 217 to 229 and 251 to 267; these read NNGS…QENY and FGSD…NSPG. The residue at position 261 (threonine 261) is a Phosphothreonine. Serine 265 is subject to Phosphoserine. The segment covering 280–289 has biased composition (low complexity); sequence TSNSTSSLNH. Over residues 291-303 the composition is skewed to basic and acidic residues; it reads SSRDIYPSKHISN. The span at 321–331 shows a compositional bias: polar residues; sequence ENVNDKNNNIT. Mn(2+) contacts are provided by aspartate 419, histidine 421, aspartate 447, and asparagine 479. Histidine 480 serves as the catalytic Proton donor. Mn(2+)-binding residues include histidine 528 and histidine 603. The disordered stretch occupies residues 672 to 692; sequence LANQQQQMMETSITNDNESQQ. The segment covering 673–692 has biased composition (polar residues); the sequence is ANQQQQMMETSITNDNESQQ. At serine 690 the chain carries Phosphoserine.

The protein belongs to the PPP phosphatase family. PP-Z subfamily. In terms of assembly, interacts with SIS2 and VHS3, which regulate its activity. Mn(2+) is required as a cofactor.

The catalysed reaction is O-phospho-L-seryl-[protein] + H2O = L-seryl-[protein] + phosphate. It carries out the reaction O-phospho-L-threonyl-[protein] + H2O = L-threonyl-[protein] + phosphate. With respect to regulation, inhibited by the regulatory subunits VHS3 and SIS2. Essential for the maintenance of cell size and integrity in response to osmotic stress. The chain is Serine/threonine-protein phosphatase PP-Z1 (PPZ1) from Saccharomyces cerevisiae (strain ATCC 204508 / S288c) (Baker's yeast).